A 250-amino-acid chain; its full sequence is 5'-nucleotidase SurE (250 aa).

Residues D8, D9, S40, and N92 each contribute to the a divalent metal cation site.

It belongs to the SurE nucleotidase family. The cofactor is a divalent metal cation.

It localises to the cytoplasm. It catalyses the reaction a ribonucleoside 5'-phosphate + H2O = a ribonucleoside + phosphate. Its function is as follows. Nucleotidase that shows phosphatase activity on nucleoside 5'-monophosphates. The chain is 5'-nucleotidase SurE from Dichelobacter nodosus (strain VCS1703A).